The chain runs to 285 residues: MLTCKAFAKINWAISVLKKRDDGYHDIISLMQAIDLHDTLIFKSSQKIEIETDLLIKKENNLVYKAIKALQNYTGIKKGVTVILKKEIPLGAGLGGGSSDAATTLKALNELWQLNLDIKTLHEIGASIGSDIPFFFYLPICIVEGRGDVVKPLKISKSYTLLLVKPDFSISTEWAYKTLDLKTELTTEYEKINNNIWQLYNHLYSGDVDNFYLWNDLEKSVLEKYPEIDKIKRKLIEAGAKSSLLSGSGSTVFGLFNNKTDAQKALKFFEGYWCRVVQTLVEPLK.

K9 is a catalytic residue. An ATP-binding site is contributed by 89-99 (PLGAGLGGGSS). The active site involves D131.

Belongs to the GHMP kinase family. IspE subfamily.

The enzyme catalyses 4-CDP-2-C-methyl-D-erythritol + ATP = 4-CDP-2-C-methyl-D-erythritol 2-phosphate + ADP + H(+). It participates in isoprenoid biosynthesis; isopentenyl diphosphate biosynthesis via DXP pathway; isopentenyl diphosphate from 1-deoxy-D-xylulose 5-phosphate: step 3/6. Functionally, catalyzes the phosphorylation of the position 2 hydroxy group of 4-diphosphocytidyl-2C-methyl-D-erythritol. This Thermodesulfovibrio yellowstonii (strain ATCC 51303 / DSM 11347 / YP87) protein is 4-diphosphocytidyl-2-C-methyl-D-erythritol kinase.